The chain runs to 985 residues: UPF0182 protein cgR_0895 (985 aa).

The next 7 membrane-spanning stretches (helical) occupy residues 19 to 39, 63 to 83, 115 to 135, 176 to 196, 215 to 235, 262 to 282, and 290 to 310; these read VTWI…SVGF, IVLF…AGYF, VMVL…QRSW, SMML…MGGI, TQLA…YWLD, KIIL…AIFL, and LAVV…PLML. Residues 906-944 form a disordered region; that stretch reads AQDIEEVDGTTTTPSTDETDTDTDQPATETPTAPVSEAE. Residues 929–939 are compositionally biased toward low complexity; that stretch reads DQPATETPTAP.

The protein belongs to the UPF0182 family.

It localises to the cell membrane. The protein is UPF0182 protein cgR_0895 of Corynebacterium glutamicum (strain R).